Reading from the N-terminus, the 140-residue chain is Large ribosomal subunit protein uL11 (140 aa).

It belongs to the universal ribosomal protein uL11 family. As to quaternary structure, part of the ribosomal stalk of the 50S ribosomal subunit. Interacts with L10 and the large rRNA to form the base of the stalk. L10 forms an elongated spine to which L12 dimers bind in a sequential fashion forming a multimeric L10(L12)X complex. One or more lysine residues are methylated.

In terms of biological role, forms part of the ribosomal stalk which helps the ribosome interact with GTP-bound translation factors. This chain is Large ribosomal subunit protein uL11, found in Karelsulcia muelleri (strain GWSS) (Sulcia muelleri).